The sequence spans 355 residues: 5-formaminoimidazole-4-carboxamide-1-(beta)-D-ribofuranosyl 5'-monophosphate synthetase (355 aa).

Residues His-27 and Ser-94 each contribute to the 5-amino-1-(5-phospho-beta-D-ribosyl)imidazole-4-carboxamide site. The ATP-grasp domain maps to 101–332 (TESFAELAVP…YSDMIEENLS (232 aa)). ATP contacts are provided by residues 144-195 (PEKI…TRYY) and Glu-225. Asn-254 is a binding site for 5-amino-1-(5-phospho-beta-D-ribosyl)imidazole-4-carboxamide. Mg(2+) is bound by residues Glu-292 and Glu-305.

It belongs to the phosphohexose mutase family. It depends on Mg(2+) as a cofactor. The cofactor is Mn(2+).

The enzyme catalyses 5-amino-1-(5-phospho-beta-D-ribosyl)imidazole-4-carboxamide + formate + ATP = 5-formamido-1-(5-phospho-D-ribosyl)imidazole-4-carboxamide + ADP + phosphate. Its pathway is purine metabolism; IMP biosynthesis via de novo pathway; 5-formamido-1-(5-phospho-D-ribosyl)imidazole-4-carboxamide from 5-amino-1-(5-phospho-D-ribosyl)imidazole-4-carboxamide (formate route): step 1/1. Catalyzes the ATP- and formate-dependent formylation of 5-aminoimidazole-4-carboxamide-1-beta-d-ribofuranosyl 5'-monophosphate (AICAR) to 5-formaminoimidazole-4-carboxamide-1-beta-d-ribofuranosyl 5'-monophosphate (FAICAR) in the absence of folates. The sequence is that of 5-formaminoimidazole-4-carboxamide-1-(beta)-D-ribofuranosyl 5'-monophosphate synthetase from Methanococcoides burtonii (strain DSM 6242 / NBRC 107633 / OCM 468 / ACE-M).